Reading from the N-terminus, the 123-residue chain is Large ribosomal subunit protein mL52 (123 aa).

A mitochondrion-targeting transit peptide spans 1–23 (MAALGTVLFTGVRRLHCSVAAWA). A compositionally biased stretch (basic and acidic residues) spans 99–109 (QEEQRKQENAL). Positions 99–123 (QEEQRKQENALKPKGASLKSPLPSQ) are disordered.

This sequence belongs to the mitochondrion-specific ribosomal protein mL52 family. In terms of assembly, component of the mitochondrial large ribosomal subunit (mt-LSU). Mature mammalian 55S mitochondrial ribosomes consist of a small (28S) and a large (39S) subunit. The 28S small subunit contains a 12S ribosomal RNA (12S mt-rRNA) and 30 different proteins. The 39S large subunit contains a 16S rRNA (16S mt-rRNA), a copy of mitochondrial valine transfer RNA (mt-tRNA(Val)), which plays an integral structural role, and 52 different proteins. mL52 connects the central protuberance to the body of the ribosome.

It is found in the mitochondrion. This Homo sapiens (Human) protein is Large ribosomal subunit protein mL52 (MRPL52).